We begin with the raw amino-acid sequence, 309 residues long: Maintenance of mitochondrial morphology protein 1 (309 aa).

Over 1–16 (MGNAYIFSLQPTFTQG) the chain is Lumenal. Residues 17-37 (LILGQFSILFLLVLVLKYLFF) traverse the membrane as a helical segment. Residues 38-309 (DTVSDHAYRT…EQQAGELPVN (272 aa)) are Cytoplasmic-facing. The SMP-LTD domain occupies 84-293 (ECESADWLNA…LPGLASVSEV (210 aa)).

Belongs to the MMM1 family. Homodimer. Component of the ER-mitochondria encounter structure (ERMES) or MDM complex, composed of MMM1, MDM10, MDM12 and MDM34. An MMM1 homodimer associates with one molecule of MDM12 on each side in a pairwise head-to-tail manner, and the SMP-LTD domains of MMM1 and MDM12 generate a continuous hydrophobic tunnel for phospholipid trafficking.

Its subcellular location is the endoplasmic reticulum membrane. Component of the ERMES/MDM complex, which serves as a molecular tether to connect the endoplasmic reticulum (ER) and mitochondria. Components of this complex are involved in the control of mitochondrial shape and protein biogenesis, and function in nonvesicular lipid trafficking between the ER and mitochondria. The MDM12-MMM1 subcomplex functions in the major beta-barrel assembly pathway that is responsible for biogenesis of all outer membrane beta-barrel proteins, and acts in a late step after the SAM complex. The MDM10-MDM12-MMM1 subcomplex further acts in the TOM40-specific pathway after the action of the MDM12-MMM1 complex. Essential for establishing and maintaining the structure of mitochondria and maintenance of mtDNA nucleoids. This chain is Maintenance of mitochondrial morphology protein 1, found in Postia placenta (strain ATCC 44394 / Madison 698-R) (Brown rot fungus).